Consider the following 180-residue polypeptide: Large ribosomal subunit protein uL5 (180 aa).

Belongs to the universal ribosomal protein uL5 family. Part of the 50S ribosomal subunit; part of the 5S rRNA/L5/L18/L25 subcomplex. Contacts the 5S rRNA and the P site tRNA. Forms a bridge to the 30S subunit in the 70S ribosome.

Its function is as follows. This is one of the proteins that bind and probably mediate the attachment of the 5S RNA into the large ribosomal subunit, where it forms part of the central protuberance. In the 70S ribosome it contacts protein S13 of the 30S subunit (bridge B1b), connecting the 2 subunits; this bridge is implicated in subunit movement. Contacts the P site tRNA; the 5S rRNA and some of its associated proteins might help stabilize positioning of ribosome-bound tRNAs. The sequence is that of Large ribosomal subunit protein uL5 from Pediococcus pentosaceus (strain ATCC 25745 / CCUG 21536 / LMG 10740 / 183-1w).